The chain runs to 1020 residues: Vacuolar membrane protease (1020 aa).

Residues 1-11 (MKCHNPFGFRV) are Cytoplasmic-facing. A helical transmembrane segment spans residues 12 to 32 (GPVTFWTIIIYLALLVPLLWI). Residues 33 to 410 (HETVPPAPSS…GFAVFGLRGL (378 aa)) lie on the Vacuolar side of the membrane. N-linked (GlcNAc...) asparagine glycans are attached at residues Asn50, Asn94, and Asn130. 2 residues coordinate Zn(2+): His191 and Asp203. Catalysis depends on Glu237, which acts as the Proton acceptor. Zn(2+) is bound by residues Glu238, Glu263, and His336. The helical transmembrane segment at 411–431 (FAWSLTLLIVSPLILAILVFI) threads the bilayer. At 432-467 (LNRHDKLYFFSRKINVHNEGSEDPVSIGGFRGFTRF) the chain is on the cytoplasmic side. Residues 468–488 (PIAVGFSGALTLASAFLLTKI) traverse the membrane as a helical segment. At 489-491 (NPM) the chain is on the vacuolar side. The helical transmembrane segment at 492-512 (IVYSSEYAVWGMMLSLFYVSL) threads the bilayer. The Cytoplasmic segment spans residues 513–529 (WMTLKGSSAVRPSALQR). A helical membrane pass occupies residues 530–550 (GYIHIWLFIVSWGLLIVVAVT). Residues 551–561 (EDRLKIASGYP) lie on the Vacuolar side of the membrane. A helical membrane pass occupies residues 562–582 (VVFLHSALFLSTVISFLELFG). At 583–690 (LTKKHDYARR…RLPGWTWILQ (108 aa)) the chain is on the cytoplasmic side. A disordered region spans residues 609–648 (DDALIAPDTPNDEAEDSDGEDSEHEPTETTPLRAGGDSRV). A compositionally biased stretch (acidic residues) spans 618 to 631 (PNDEAEDSDGEDSE). A helical membrane pass occupies residues 691–711 (FLLLAPINVILWGQIGLFAVA). At 712–724 (ATQAGGADGGSVL) the chain is on the vacuolar side. The helical transmembrane segment at 725–745 (TTYLIIAVLSIVILVPLAPFI) threads the bilayer. The Cytoplasmic portion of the chain corresponds to 746-750 (HRVHY). A helical transmembrane segment spans residues 751 to 771 (YVPIILFAAFAGTLIYNLIAF). Residues 772 to 1020 (PFSANNRYKI…VGLVRPVKRF (249 aa)) lie on the Vacuolar side of the membrane. 3 N-linked (GlcNAc...) asparagine glycosylation sites follow: Asn851, Asn868, and Asn873.

The protein belongs to the peptidase M28 family. It depends on Zn(2+) as a cofactor.

It localises to the vacuole membrane. In terms of biological role, may be involved in vacuolar sorting and osmoregulation. The sequence is that of Vacuolar membrane protease from Verticillium alfalfae (strain VaMs.102 / ATCC MYA-4576 / FGSC 10136) (Verticillium wilt of alfalfa).